The sequence spans 351 residues: ABC transporter nucleoside-binding protein BmpA (351 aa).

Residues 1 to 21 (MKKRVIAVSAIALASVAVLAG) form the signal peptide. Residue Cys22 is the site of N-palmitoyl cysteine attachment. Cys22 carries the S-diacylglycerol cysteine lipid modification.

It belongs to the BMP lipoprotein family. As to quaternary structure, the complex is composed of two ATP-binding proteins (NupA), two transmembrane proteins (NupB and NupC) and a solute-binding protein (BmpA).

It is found in the cell membrane. Functionally, part of an ABC transporter complex involved in the uptake of all common nucleosides. The polypeptide is ABC transporter nucleoside-binding protein BmpA (Lactococcus lactis subsp. cremoris (strain MG1363)).